The sequence spans 76 residues: MSLEEKVKNIIVDKLGVEPDEVVEEASFVDDLGADSLDLVELIMSMEETFDLEISDEEAEKILKVKDVIEYIKAHT.

The Carrier domain maps to 1 to 76; that stretch reads MSLEEKVKNI…DVIEYIKAHT (76 aa). Ser-36 is subject to O-(pantetheine 4'-phosphoryl)serine.

The protein belongs to the acyl carrier protein (ACP) family. 4'-phosphopantetheine is transferred from CoA to a specific serine of apo-ACP by AcpS. This modification is essential for activity because fatty acids are bound in thioester linkage to the sulfhydryl of the prosthetic group.

The protein localises to the cytoplasm. Its pathway is lipid metabolism; fatty acid biosynthesis. Its function is as follows. Carrier of the growing fatty acid chain in fatty acid biosynthesis. The protein is Acyl carrier protein of Desulfatibacillum aliphaticivorans.